The following is a 511-amino-acid chain: Lysine--tRNA ligase (511 aa).

The interval 1–20 (MQKNTSQPTNTNEQSNQPSL) is disordered. Mg(2+) is bound by residues Glu422 and Glu429.

The protein belongs to the class-II aminoacyl-tRNA synthetase family. In terms of assembly, homodimer. It depends on Mg(2+) as a cofactor.

It is found in the cytoplasm. It catalyses the reaction tRNA(Lys) + L-lysine + ATP = L-lysyl-tRNA(Lys) + AMP + diphosphate. In Chlorobium chlorochromatii (strain CaD3), this protein is Lysine--tRNA ligase.